Reading from the N-terminus, the 319-residue chain is Ribonucleoside-diphosphate reductase small chain (319 aa).

The Fe cation site is built by D70, E101, and H104. Residue Y108 is part of the active site. Fe cation is bound by residues E163, E197, and H200. An interaction with R1 region spans residues F313 to F319.

The protein belongs to the ribonucleoside diphosphate reductase small chain family. As to quaternary structure, interacts with RNR1/OPG080 subunit. Can interact with host RNR1 supunit. Fe cation serves as cofactor.

The catalysed reaction is a 2'-deoxyribonucleoside 5'-diphosphate + [thioredoxin]-disulfide + H2O = a ribonucleoside 5'-diphosphate + [thioredoxin]-dithiol. In terms of biological role, ribonucleoside-diphosphate reductase holoenzyme provides the precursors necessary for viral DNA synthesis. Allows virus growth in non-dividing cells. Catalyzes the biosynthesis of deoxyribonucleotides from the corresponding ribonucleotides. The chain is Ribonucleoside-diphosphate reductase small chain (OPG048) from Homo sapiens (Human).